Consider the following 132-residue polypeptide: T-cell receptor alpha chain V region CTL-F3 (132 aa).

An N-terminal signal peptide occupies residues 1–22 (MNMRPDTCSVLVLLLMLRRNNG). Positions 23–114 (DSVTQTEGLV…DSALYYCALS (92 aa)) are v segment. N43 carries an N-linked (GlcNAc...) asparagine glycan. A disulfide bridge links C44 with C111. The j segment stretch occupies residues 115 to 132 (NAGAKLTFGGGTRLTVRP).

In Mus musculus (Mouse), this protein is T-cell receptor alpha chain V region CTL-F3.